The sequence spans 421 residues: Trimethyllysine dioxygenase, mitochondrial (421 aa).

The transit peptide at 1–15 (MWYHKLLHQQSRLQN) directs the protein to the mitochondrion. N6-acetyllysine occurs at positions 179 and 236. Fe cation contacts are provided by H242, D244, and H389.

It belongs to the gamma-BBH/TMLD family. In terms of assembly, homodimer. The cofactor is Fe(2+). Requires L-ascorbate as cofactor.

It localises to the mitochondrion matrix. It catalyses the reaction N(6),N(6),N(6)-trimethyl-L-lysine + 2-oxoglutarate + O2 = (3S)-3-hydroxy-N(6),N(6),N(6)-trimethyl-L-lysine + succinate + CO2. It participates in amine and polyamine biosynthesis; carnitine biosynthesis. Converts trimethyllysine (TML) into hydroxytrimethyllysine (HTML). In Rattus norvegicus (Rat), this protein is Trimethyllysine dioxygenase, mitochondrial (Tmlhe).